We begin with the raw amino-acid sequence, 363 residues long: G kinase-anchoring protein 1-B (363 aa).

Disordered regions lie at residues 17-79 (ALLK…RNLA) and 147-182 (VNGDGVNGVPQSKKVNKKDKRKNNQGKDKPLTVPLK). Residues 50-79 (KTNVNEKKKEKRRKKKEQQQSEANELRNLA) adopt a coiled-coil conformation. Over residues 160–170 (KVNKKDKRKNN) the composition is skewed to basic residues. 2 coiled-coil regions span residues 249 to 298 (DGKT…QEGE) and 328 to 348 (AALEQERSKVKVLQAEQVRYQ).

This sequence belongs to the GKAP1 family.

The protein localises to the golgi apparatus. May play a role in the regulation of insulin-dependent IRS1 tyrosine phosphorylation in adipocytes. This is G kinase-anchoring protein 1-B (gkap1-b) from Xenopus laevis (African clawed frog).